The sequence spans 654 residues: Fructose-1,6-bisphosphatase class 3 (654 aa).

Residues 288–307 (NPAFKPKKRPDKHERLTQRE) are disordered. Positions 298–307 (DKHERLTQRE) are enriched in basic and acidic residues.

Belongs to the FBPase class 3 family. The cofactor is Mn(2+).

The enzyme catalyses beta-D-fructose 1,6-bisphosphate + H2O = beta-D-fructose 6-phosphate + phosphate. Its pathway is carbohydrate biosynthesis; gluconeogenesis. This Staphylococcus aureus (strain bovine RF122 / ET3-1) protein is Fructose-1,6-bisphosphatase class 3.